A 245-amino-acid polypeptide reads, in one-letter code: 1-(5-phosphoribosyl)-5-[(5-phosphoribosylamino)methylideneamino] imidazole-4-carboxamide isomerase (245 aa).

The active-site Proton acceptor is the Asp-8. The Proton donor role is filled by Asp-131.

This sequence belongs to the HisA/HisF family.

It localises to the cytoplasm. It carries out the reaction 1-(5-phospho-beta-D-ribosyl)-5-[(5-phospho-beta-D-ribosylamino)methylideneamino]imidazole-4-carboxamide = 5-[(5-phospho-1-deoxy-D-ribulos-1-ylimino)methylamino]-1-(5-phospho-beta-D-ribosyl)imidazole-4-carboxamide. It functions in the pathway amino-acid biosynthesis; L-histidine biosynthesis; L-histidine from 5-phospho-alpha-D-ribose 1-diphosphate: step 4/9. This Neisseria meningitidis serogroup C / serotype 2a (strain ATCC 700532 / DSM 15464 / FAM18) protein is 1-(5-phosphoribosyl)-5-[(5-phosphoribosylamino)methylideneamino] imidazole-4-carboxamide isomerase.